A 401-amino-acid polypeptide reads, in one-letter code: Acetate kinase (401 aa).

Asn9 is a Mg(2+) binding site. An ATP-binding site is contributed by Lys16. Substrate is bound at residue Arg88. Residue Asp147 is the Proton donor/acceptor of the active site. Residues 207 to 211 (HLGNG), 282 to 284 (DCR), and 333 to 337 (GIGEN) each bind ATP. Glu388 is a Mg(2+) binding site.

Belongs to the acetokinase family. In terms of assembly, homodimer. Requires Mg(2+) as cofactor. Mn(2+) serves as cofactor.

It is found in the cytoplasm. It catalyses the reaction acetate + ATP = acetyl phosphate + ADP. Its pathway is metabolic intermediate biosynthesis; acetyl-CoA biosynthesis; acetyl-CoA from acetate: step 1/2. Functionally, catalyzes the formation of acetyl phosphate from acetate and ATP. Can also catalyze the reverse reaction. The polypeptide is Acetate kinase (Haemophilus influenzae (strain ATCC 51907 / DSM 11121 / KW20 / Rd)).